Reading from the N-terminus, the 102-residue chain is Amoebiasin-1 (102 aa).

Positions 27–32 (NPTTGY) match the BC loop motif. The short motif at 51–61 (DQHAPGICGCG) is the DE loop element. An FG loop motif is present at residues 85–93 (PWAPNANDR).

It belongs to the protease inhibitor I42 family. As to quaternary structure, monomer. During oxidative conditions, forms homooligomers; disulfide-linked. Interacts with cysteine protease CP2. Interacts with cysteine protease CP5. In terms of processing, during oxidative conditions, cys-39, cys-58 and cys-60 react to form intra- and inter-molecular disulfide bonds resulting in the loss of the protein inhibitory activity.

Its subcellular location is the cytoplasm. In terms of biological role, cysteine protease inhibitor. Inhibits cysteine proteases CP1, CP2 and CP5. May protect the cytosol against cysteine proteases released by damaged intracellular vesicles. The chain is Amoebiasin-1 from Entamoeba histolytica (strain ATCC 30459 / HM-1:IMSS / ABRM).